The primary structure comprises 986 residues: Bifunctional glutamine synthetase adenylyltransferase/adenylyl-removing enzyme (986 aa).

The interval 1–482 (MVTTVISNVK…RYGRLFAGEE (482 aa)) is adenylyl removase. Residues 486-986 (SRFGSLVFTG…RAAYEAVVKG (501 aa)) are adenylyl transferase.

The protein belongs to the GlnE family. The cofactor is Mg(2+).

It catalyses the reaction [glutamine synthetase]-O(4)-(5'-adenylyl)-L-tyrosine + phosphate = [glutamine synthetase]-L-tyrosine + ADP. The catalysed reaction is [glutamine synthetase]-L-tyrosine + ATP = [glutamine synthetase]-O(4)-(5'-adenylyl)-L-tyrosine + diphosphate. Its function is as follows. Involved in the regulation of glutamine synthetase GlnA, a key enzyme in the process to assimilate ammonia. When cellular nitrogen levels are high, the C-terminal adenylyl transferase (AT) inactivates GlnA by covalent transfer of an adenylyl group from ATP to specific tyrosine residue of GlnA, thus reducing its activity. Conversely, when nitrogen levels are low, the N-terminal adenylyl removase (AR) activates GlnA by removing the adenylyl group by phosphorolysis, increasing its activity. The regulatory region of GlnE binds the signal transduction protein PII (GlnB) which indicates the nitrogen status of the cell. This Caulobacter vibrioides (strain ATCC 19089 / CIP 103742 / CB 15) (Caulobacter crescentus) protein is Bifunctional glutamine synthetase adenylyltransferase/adenylyl-removing enzyme.